Consider the following 231-residue polypeptide: WAP four-disulfide core domain protein 3 (231 aa).

The signal sequence occupies residues 1-24 (MMLSCLFLLKALLALGSLESWITA). 4 WAP domains span residues 26 to 68 (EHAK…CRDI), 69 to 114 (PKGR…VVPI), 119 to 162 (LAEF…LGDI), and 163 to 207 (EGGR…VPPV). 16 cysteine pairs are disulfide-bonded: Cys33/Cys57, Cys40/Cys61, Cys44/Cys56, Cys50/Cys65, Cys76/Cys102, Cys85/Cys106, Cys89/Cys101, Cys95/Cys110, Cys126/Cys150, Cys133/Cys154, Cys137/Cys149, Cys143/Cys158, Cys170/Cys195, Cys178/Cys199, Cys182/Cys194, and Cys188/Cys203. Asn107 is a glycosylation site (N-linked (GlcNAc...) asparagine). N-linked (GlcNAc...) asparagine glycosylation occurs at Asn217.

Ubiquitously expressed.

Its subcellular location is the secreted. The chain is WAP four-disulfide core domain protein 3 (WFDC3) from Homo sapiens (Human).